We begin with the raw amino-acid sequence, 201 residues long: Recombination protein RecR (201 aa).

Residues 57 to 72 (CADCRTFTEQEVCNIC) form a C4-type zinc finger. Residues 81 to 176 (GQICVVESPA…DASRIAHGVP (96 aa)) form the Toprim domain.

This sequence belongs to the RecR family.

Its function is as follows. May play a role in DNA repair. It seems to be involved in an RecBC-independent recombinational process of DNA repair. It may act with RecF and RecO. The chain is Recombination protein RecR from Klebsiella pneumoniae subsp. pneumoniae (strain ATCC 700721 / MGH 78578).